The following is a 490-amino-acid chain: Sec sixty-one protein homolog (490 aa).

The Cytoplasmic segment spans residues 1-32 (MSGFRLIDIVKPILPILPEVELPFEKLPFDDK). The helical transmembrane segment at 33-53 (IVYTIFAGLIYLFAQFPLVGL) threads the bilayer. Topologically, residues 54 to 121 (PKATTPNVND…DRELFQSLTK (68 aa)) are lumenal. A helical membrane pass occupies residues 122-142 (VFAIVQYVILTNIFIFAGYFG). Topologically, residues 143 to 146 (DDLS) are cytoplasmic. Residues 147-167 (VVQIGLINFQLVGAGIFTTLL) form a helical membrane-spanning segment. Topologically, residues 168–174 (AEVIDKG) are lumenal. The chain crosses the membrane as a helical span at residues 175–195 (FGFSSGAMIINTVVIATNLVA). Over 196–242 (DTFGVSQIKVGEDDQTEAQGALINLIQGLRSKHKTFIGGIISAFNRD) the chain is Cytoplasmic. Residues 243-263 (YLPNLTTTIIVLAIAIIVCYL) traverse the membrane as a helical segment. Residues 264-293 (QSVRVELPIRSTRARGTNNVYPIKLLYTGC) lie on the Lumenal side of the membrane. Residues 294–314 (LSVLFSYTILFYIHIFAFVLI) traverse the membrane as a helical segment. Topologically, residues 315–339 (QLVAKNEPTHIICKIMGHYENANNL) are cytoplasmic. A helical membrane pass occupies residues 340-360 (LAVPTFPLSLLAPPTSFFKGV). Position 361 (Thr361) is a topological domain, lumenal. A helical membrane pass occupies residues 362–382 (QQPLTFITYSAFILVTGIWFA). The Cytoplasmic segment spans residues 383–421 (DKWQAISGSSARDVALEFKDQGITLMGRREQNVAKELNK). A helical transmembrane segment spans residues 422–442 (VIPIAAVTGASVLSLITVIGE). Over 443-449 (SLGLKGK) the chain is Lumenal. Residues 450–470 (AAGIVVGIAGGFSLLEVITIE) traverse the membrane as a helical segment. At 471-490 (YQQSGGQSALNQVLGVPGAM) the chain is on the cytoplasmic side.

Belongs to the SecY/SEC61-alpha family. As to quaternary structure, component of the heterotrimeric Ssh1 complex, which is composed of SSH1, SBH2 and SSS1.

It is found in the endoplasmic reticulum membrane. Part of the Ssh1 complex, which probably is the major component of a channel-forming translocon complex that may function exclusively in the cotranslational pathway of protein endoplasmic reticulum (ER) import. The chain is Sec sixty-one protein homolog (SSH1) from Saccharomyces cerevisiae (strain ATCC 204508 / S288c) (Baker's yeast).